Consider the following 251-residue polypeptide: Cell division protein ZapD (251 aa).

It belongs to the ZapD family. In terms of assembly, interacts with FtsZ.

The protein resides in the cytoplasm. Cell division factor that enhances FtsZ-ring assembly. Directly interacts with FtsZ and promotes bundling of FtsZ protofilaments, with a reduction in FtsZ GTPase activity. In Burkholderia cenocepacia (strain HI2424), this protein is Cell division protein ZapD.